The following is a 291-amino-acid chain: Nucleotide-binding protein jk1004 (291 aa).

Position 16-23 (16-23) interacts with ATP; sequence GMSGAGRR. Position 67–70 (67–70) interacts with GTP; sequence DVRS.

Belongs to the RapZ-like family.

Displays ATPase and GTPase activities. The polypeptide is Nucleotide-binding protein jk1004 (Corynebacterium jeikeium (strain K411)).